The chain runs to 226 residues: dTTP/UTP pyrophosphatase (226 aa).

The Proton acceptor role is filled by Asp85.

The protein belongs to the Maf family. YhdE subfamily. It depends on a divalent metal cation as a cofactor.

It is found in the cytoplasm. It carries out the reaction dTTP + H2O = dTMP + diphosphate + H(+). The catalysed reaction is UTP + H2O = UMP + diphosphate + H(+). In terms of biological role, nucleoside triphosphate pyrophosphatase that hydrolyzes dTTP and UTP. May have a dual role in cell division arrest and in preventing the incorporation of modified nucleotides into cellular nucleic acids. The polypeptide is dTTP/UTP pyrophosphatase (Psychrobacter cryohalolentis (strain ATCC BAA-1226 / DSM 17306 / VKM B-2378 / K5)).